The sequence spans 259 residues: Deoxyribose-phosphate aldolase (259 aa).

The active-site Proton donor/acceptor is the Asp102. Lys167 (schiff-base intermediate with acetaldehyde) is an active-site residue. Lys201 acts as the Proton donor/acceptor in catalysis.

It belongs to the DeoC/FbaB aldolase family. DeoC type 2 subfamily.

Its subcellular location is the cytoplasm. It catalyses the reaction 2-deoxy-D-ribose 5-phosphate = D-glyceraldehyde 3-phosphate + acetaldehyde. It participates in carbohydrate degradation; 2-deoxy-D-ribose 1-phosphate degradation; D-glyceraldehyde 3-phosphate and acetaldehyde from 2-deoxy-alpha-D-ribose 1-phosphate: step 2/2. Functionally, catalyzes a reversible aldol reaction between acetaldehyde and D-glyceraldehyde 3-phosphate to generate 2-deoxy-D-ribose 5-phosphate. The sequence is that of Deoxyribose-phosphate aldolase from Escherichia coli (strain SMS-3-5 / SECEC).